A 247-amino-acid polypeptide reads, in one-letter code: ATP synthase subunit a, chloroplastic (247 aa).

5 helical membrane-spanning segments follow: residues 38-58 (QVLI…TLAV), 95-115 (VPFI…GALL), 134-154 (INTT…AGLS), 199-219 (LVVV…VMFL), and 220-240 (GLFT…AYIG).

The protein belongs to the ATPase A chain family. In terms of assembly, F-type ATPases have 2 components, CF(1) - the catalytic core - and CF(0) - the membrane proton channel. CF(1) has five subunits: alpha(3), beta(3), gamma(1), delta(1), epsilon(1). CF(0) has four main subunits: a, b, b' and c.

It is found in the plastid. The protein localises to the chloroplast thylakoid membrane. Functionally, key component of the proton channel; it plays a direct role in the translocation of protons across the membrane. The polypeptide is ATP synthase subunit a, chloroplastic (Lemna minor (Common duckweed)).